Consider the following 292-residue polypeptide: MLISVPATSANLGPGFDTLGLAVDLRNEIVIKPSKFLSLSTHGEGADNPKIKKNSLFLSIFNENYKRLSGKANNFRFEFTNRIPISRGLGSSSAVIVAALSGAYAMAGVKYNKREILNQALRYEHHPDNITPAVMGGFNVACVEGDRVYSKKRRMPDYLRAVVVVPNRTISTARSRTVLPKMYRKEETVYSLSRAAYMTALFMSESWDLLRIASKDKLHQARRMKMMPELFDVQKLALKQGALMSTLSGSGSTFFNLAYEKDTDRIAQSLRARFPQFRVFVLALDNNGVITK.

84-94 is an ATP binding site; sequence PISRGLGSSSA.

It belongs to the GHMP kinase family. Homoserine kinase subfamily.

Its subcellular location is the cytoplasm. It catalyses the reaction L-homoserine + ATP = O-phospho-L-homoserine + ADP + H(+). It participates in amino-acid biosynthesis; L-threonine biosynthesis; L-threonine from L-aspartate: step 4/5. In terms of biological role, catalyzes the ATP-dependent phosphorylation of L-homoserine to L-homoserine phosphate. The polypeptide is Homoserine kinase (Sulfurovum sp. (strain NBC37-1)).